The following is a 66-amino-acid chain: UPF0337 protein SAG0619 (66 aa).

The disordered stretch occupies residues 1–22 (MSQEKLKSKLDQAKGGAKEGFG).

Belongs to the UPF0337 (CsbD) family.

The polypeptide is UPF0337 protein SAG0619 (Streptococcus agalactiae serotype V (strain ATCC BAA-611 / 2603 V/R)).